The chain runs to 282 residues: MSIKFWMNKEGRKPANTKRKAYLFTLGSFVTMFFVLCISPVFSGATYKFEEMKIGEYQSLSSTVKIAVAKKEYNPDNQTLRIDYELRADNDSQILSNMKYKVENKYIKQKDNNVKTKVYRASDNYIVVISENVPEEFGVVSSVVKPEYIHPELQNDVDDLKERSMKMYVLENEKLINRELKKKSKDFYEREYLAFSQQALRKEIEKKMEDKSSAMKQLKIKNEQLTKEMEYQTEGEKVKTKNTINSNESTINNHQKEIDVLKEDIKMKEKKIQLLDEKKKTI.

A helical transmembrane segment spans residues 22 to 42 (YLFTLGSFVTMFFVLCISPVF).

It localises to the cell membrane. This is an uncharacterized protein from Bacillus anthracis.